The primary structure comprises 356 residues: Glucan endo-1,3-beta-glucosidase, acidic isoform GL153 (356 aa).

The N-terminal stretch at 1 to 29 is a signal peptide; the sequence is MALCIKNGFLAAALVLVGLLMCSIQMIGA. Q30 carries the pyrrolidone carboxylic acid modification. An N-linked (GlcNAc...) asparagine glycan is attached at N95. Catalysis depends on E124, which acts as the Proton donor. The active-site Nucleophile is the E264.

This sequence belongs to the glycosyl hydrolase 17 family. In terms of tissue distribution, is expressed primarily in epidermal cell of healthy plant, and following induction by ethylene, accumulates in mesophyll cells.

The protein localises to the secreted. It localises to the extracellular space. It carries out the reaction Hydrolysis of (1-&gt;3)-beta-D-glucosidic linkages in (1-&gt;3)-beta-D-glucans.. In terms of biological role, is thought to be an important plant defense-related product against fungal pathogens. The polypeptide is Glucan endo-1,3-beta-glucosidase, acidic isoform GL153 (GGL4) (Nicotiana tabacum (Common tobacco)).